Reading from the N-terminus, the 506-residue chain is Galactose/methyl galactoside import ATP-binding protein MglA (506 aa).

ABC transporter domains lie at 14 to 249 (LEMS…VGRS) and 264 to 506 (VILE…SLHL). Position 46–53 (46–53 (GENGAGKS)) interacts with ATP.

Belongs to the ABC transporter superfamily. Galactose/methyl galactoside importer (TC 3.A.1.2.3) family. As to quaternary structure, the complex is composed of one ATP-binding protein (MglA), two transmembrane proteins (MglC) and a solute-binding protein (MglB).

It is found in the cell inner membrane. The catalysed reaction is D-galactose(out) + ATP + H2O = D-galactose(in) + ADP + phosphate + H(+). It catalyses the reaction methyl beta-D-galactoside(out) + ATP + H2O = methyl beta-D-galactoside(in) + ADP + phosphate + H(+). Part of the ABC transporter complex MglABC involved in galactose/methyl galactoside import. Responsible for energy coupling to the transport system. The chain is Galactose/methyl galactoside import ATP-binding protein MglA from Escherichia coli O157:H7.